We begin with the raw amino-acid sequence, 265 residues long: HTH-type transcriptional activator CfaD (265 aa).

One can recognise an HTH araC/xylS-type domain in the interval 164–261 (DKVRNVIEKD…GVTPKQFFTY (98 aa)). DNA-binding regions (H-T-H motif) lie at residues 181 to 202 (GIIA…ESEN) and 228 to 251 (ISQI…NKHY).

As to quaternary structure, homodimer.

Functionally, transcriptional activator of the CFA/I adhesin (cfaA and cfaB) genes of enterotoxigenic E.coli at 37 degrees Celsius. Also represses the silencing effect of H-NS (hns). The polypeptide is HTH-type transcriptional activator CfaD (Escherichia coli).